A 160-amino-acid polypeptide reads, in one-letter code: MLQIIRGKLVIFLITLCLFVVYLGFDNNSNSDIVFYGHKTPKSVEIYLSEKNIIYKIINDQKISRGNGHFISIMVNNYRTHCGVVDINLNFFNDILYSVRLKNISKLENMEFCATKQRVYFSDKNKKASYKIINYGDYYDVDYYDNNLKNEVFDWIGKWS.

This is an uncharacterized protein from Escherichia coli (strain K12).